Reading from the N-terminus, the 551-residue chain is MDQPSPSAEDSQPERQSTGTRGTRFWAVFVSLCFASFVASLDITAITTALPTVTRELDGGENYVWIANSYTLASAVVQPLIGQISNIVGRRNPMIILMCLFALGSGICGGATSTGMMIAGRTVQGLGAGGILLLLEVIVCDLVPLRERAQYVGIALSTCALGISLGPLVGGALVQHATWRWVFYINLPCAGVALVALVLCLNVQHKREVSWGRALARVDWVGNTIFIAAICAIMYALVIGGSVHPWSSYQVLVPLVLGAFGWVLFHIFEASPYCLEPTMPPRLFRNRTSMTAYVLAFLAAMLMQWVVYFLTLFFQTVKGQSTTMSGVDVIPFTGFMIPSAIVGGAIMSKTGVYRPLHWAGFALLSICMGVFSTWDAGTPRAEWVILQCLVGLGHGLLLTSVLPAIQAALPESDNAAATSAYAFLRSFGFVWGVEIPAVVFNGQVDRFISRVHDATVRNKLAHGGAYSLAGTSFLSQLGDEADAVRSTYTDSLRTVWQVGMAFALLGFALVVVEKHIELRTTLETDFGLEGSENRAATSVEGVETGPVSKAQ.

A run of 8 helical transmembrane segments spans residues 26–46, 64–84, 93–113, 125–145, 154–174, 181–201, 220–240, and 251–271; these read WAVFVSLCFASFVASLDITAI, VWIANSYTLASAVVQPLIGQI, PMIILMCLFALGSGICGGATS, GLGAGGILLLLEVIVCDLVPL, IALSTCALGISLGPLVGGALV, WVFYINLPCAGVALVALVLCL, WVGNTIFIAAICAIMYALVIG, and VLVPLVLGAFGWVLFHIFEAS. N-linked (GlcNAc...) asparagine glycosylation occurs at Asn-286. The next 6 helical transmembrane spans lie at 294–314, 327–347, 356–376, 385–405, 420–440, and 492–512; these read VLAFLAAMLMQWVVYFLTLFF, VDVIPFTGFMIPSAIVGGAIM, LHWAGFALLSICMGVFSTWDA, ILQCLVGLGHGLLLTSVLPAI, AYAFLRSFGFVWGVEIPAVVF, and LRTVWQVGMAFALLGFALVVV.

Belongs to the major facilitator superfamily.

It is found in the membrane. In terms of biological role, MFS efflux transporter; part of the gene cluster that mediates the biosynthesis of aspirochlorine (or antibiotic A30641), an unusual halogenated spiro compound with distinctive antifungal properties due to selective inhibition of protein biosynthesis, and which is also active against bacteria, viruses, and murine tumor cells. The protein is MFS efflux transporter aclA of Aspergillus oryzae (strain ATCC 42149 / RIB 40) (Yellow koji mold).